An 875-amino-acid polypeptide reads, in one-letter code: Valine--tRNA ligase (875 aa).

Residues 41 to 51 (PNVTGSLHMGH) carry the 'HIGH' region motif. The 'KMSKS' region signature appears at 525–529 (KMSKS). K528 contacts ATP. A coiled-coil region spans residues 810–875 (VDLELIKKNL…ERISITIKGL (66 aa)).

Belongs to the class-I aminoacyl-tRNA synthetase family. ValS type 1 subfamily. Monomer.

The protein localises to the cytoplasm. The enzyme catalyses tRNA(Val) + L-valine + ATP = L-valyl-tRNA(Val) + AMP + diphosphate. Its function is as follows. Catalyzes the attachment of valine to tRNA(Val). As ValRS can inadvertently accommodate and process structurally similar amino acids such as threonine, to avoid such errors, it has a 'posttransfer' editing activity that hydrolyzes mischarged Thr-tRNA(Val) in a tRNA-dependent manner. The chain is Valine--tRNA ligase from Pelagibacter ubique (strain HTCC1062).